A 105-amino-acid chain; its full sequence is Class II hydrophobin 1 (105 aa).

An N-terminal signal peptide occupies residues 1–15 (MQVLLIATLVASVLA). 4 disulfide bridges follow: cysteine 38–cysteine 87, cysteine 48–cysteine 78, cysteine 49–cysteine 58, and cysteine 88–cysteine 99.

It belongs to the cerato-ulmin hydrophobin family. Homotetramer. Further self-assembles to form highly ordered films at water-air interfaces through intermolecular interactions.

It localises to the secreted. Its subcellular location is the cell wall. Functionally, aerial growth, conidiation, and dispersal of filamentous fungi in the environment rely upon a capability of their secreting small amphipathic proteins called hydrophobins (HPBs) with low sequence identity. Class I can self-assemble into an outermost layer of rodlet bundles on aerial cell surfaces, conferring cellular hydrophobicity that supports fungal growth, development and dispersal; whereas Class II form highly ordered films at water-air interfaces through intermolecular interactions but contribute nothing to the rodlet structure. HYD1 is a class II hydrophobin that plays roles in conidiation and cuticle-bypassing infection by regulating the transcripts of frequency clock protein frq, and velvet protein vosA, as well as primordium formation via the mitogen-activated protein kinase signaling pathway. Also participates in stress response, including tolerance of mycelia to osmotic and oxidative stresses, and conidia to high or low temperature. Acts as a defensive factor against Calcarisporium cordycipiticola infection, probably via the formation of a physical barrier to inhibit the pathogen infection owing to its hydrophobicity or binding to the effector of C.cordycipiticola, hindering the recognition of the pathogen. Finally, regulates the transcription of the AreA transcription factor at different developmental stages via a positive feedback loop. This is Class II hydrophobin 1 from Cordyceps militaris (Caterpillar fungus).